The chain runs to 355 residues: 45 kDa calcium-binding protein (355 aa).

A signal peptide spans 1–29 (MASRQGPLCGLAPCCLWLLGVILLMNASA). Asn-26 carries N-linked (GlcNAc...) asparagine glycosylation. 2 EF-hand domains span residues 91–126 (KSRR…KTAE) and 130–165 (EAVA…TKGH). A Phosphoserine modification is found at Ser-92. 10 residues coordinate Ca(2+): Asp-104, Asn-106, Asp-108, Arg-110, Glu-115, Asp-143, Asp-145, Asp-147, His-149, and Glu-154. Thr-186 and Thr-210 each carry phosphothreonine. EF-hand domains follow at residues 226–261 (MLQF…TVEN), 271–306 (WVRD…MNEF), and 307–342 (SALN…FTGS). Residues Asp-239, Asp-241, Asp-243, Lys-245, and Glu-250 each coordinate Ca(2+). Thr-258 is subject to Phosphothreonine. Residues Asp-284, Asn-286, and Asp-288 each coordinate Ca(2+). A Phosphothreonine modification is found at Thr-292. Positions 295, 320, 322, 324, 326, and 331 each coordinate Ca(2+). The tract at residues 302 to 355 (PMNEFSALNEAKQMIAIADENQNHYLEPEEVLKYSEFFTGSKLVDYARSVHEEF) is necessary for intracellular retention in Golgi apparatus lumen.

Belongs to the CREC family.

The protein localises to the golgi apparatus lumen. In terms of biological role, may regulate calcium-dependent activities in the endoplasmic reticulum lumen or post-ER compartment. The sequence is that of 45 kDa calcium-binding protein (SDF4) from Capra hircus (Goat).